Reading from the N-terminus, the 655-residue chain is Sphingomyelin phosphodiesterase 3 (655 aa).

The Cytoplasmic portion of the chain corresponds to 1–10 (MVLYTTPFPN). The segment at residues 11–31 (SCLSALHCVSWALIFPCYWLV) is an intramembrane region (helical). Residues 32–64 (DRLAASFIPTTYEKRQRADDPCCLQLLCTALFT) are Cytoplasmic-facing. Residues Cys-53, Cys-54, and Cys-59 are each lipidated (S-palmitoyl cysteine). An intramembrane region (helical) is located at residues 65-85 (PIYLALLVASLPFAFLGFLFW). Residues 86–655 (SPLQSARRPY…LMVSSGEEEA (570 aa)) are Cytoplasmic-facing. Phosphoserine is present on Ser-178. Residues 210 to 319 (VEYKGDGGRH…DTSASGEPGA (110 aa)) form a disordered region. Basic and acidic residues-rich tracts occupy residues 212–222 (YKGDGGRHPGD) and 248–257 (GGEEGGRPPE). Residues 279-299 (TPNHNQQDGDSGSLGSPSASR) show a composition bias toward polar residues. Position 291 is a phosphoserine (Ser-291). Glu-364 provides a ligand contact to Mg(2+). 2 S-palmitoyl cysteine lipidation sites follow: Cys-397 and Cys-398. Residue His-639 is the Proton acceptor of the active site.

Belongs to the neutral sphingomyelinase family. It depends on Mg(2+) as a cofactor. Palmitoylated, palmitoylation-deficient proteins are targeted for lysosomal degradation. In terms of tissue distribution, predominantly expressed in brain.

Its subcellular location is the golgi apparatus membrane. It is found in the cell membrane. It catalyses the reaction a sphingomyelin + H2O = phosphocholine + an N-acylsphing-4-enine + H(+). It carries out the reaction N-(15Z-tetracosenoyl)sphing-4-enine-1-phosphocholine + H2O = N-(15Z-tetracosenoyl)-sphing-4-enine + phosphocholine + H(+). The catalysed reaction is N-(tetracosanoyl)-sphing-4-enine-1-phosphocholine + H2O = N-tetracosanoyl-sphing-4-enine + phosphocholine + H(+). The enzyme catalyses an N-(acyl)-sphingosylphosphocholine + H2O = an N-acyl-sphingoid base + phosphocholine + H(+). It catalyses the reaction 1-hexadecanoyl-sn-glycero-3-phosphocholine + H2O = 1-hexadecanoyl-sn-glycerol + phosphocholine + H(+). It carries out the reaction 1-O-octadecyl-sn-glycero-3-phosphocholine + H2O = 1-O-octadecyl-sn-glycerol + phosphocholine + H(+). The catalysed reaction is a sphingosylphosphocholine + H2O = a sphingoid base + phosphocholine + H(+). The enzyme catalyses N-(hexadecanoyl)-sphing-4-enine-1-phosphocholine + H2O = N-hexadecanoylsphing-4-enine + phosphocholine + H(+). It participates in lipid metabolism; sphingolipid metabolism. With respect to regulation, inhibited by nSMase inhibitor GW4869. Binding of anionic phospholipids (APLs) such as phosphatidylserine (PS) and phosphatidic acid (PA) increases enzymatic activity. Its function is as follows. Catalyzes the hydrolysis of sphingomyelin to form ceramide and phosphocholine. Ceramide mediates numerous cellular functions, such as apoptosis and growth arrest, and is capable of regulating these 2 cellular events independently. Also hydrolyzes sphingosylphosphocholine. Regulates the cell cycle by acting as a growth suppressor in confluent cells. Probably acts as a regulator of postnatal development and participates in bone and dentin mineralization. Binds to anionic phospholipids (APLs) such as phosphatidylserine (PS) and phosphatidic acid (PA) that modulate enzymatic activity and subcellular location. May be involved in IL-1-beta-induced JNK activation in hepatocytes. May act as a mediator in transcriptional regulation of NOS2/iNOS via the NF-kappa-B activation under inflammatory conditions. This Homo sapiens (Human) protein is Sphingomyelin phosphodiesterase 3.